The primary structure comprises 109 residues: Nucleoid-associated protein Asuc_0997 (109 aa).

The segment at 1–23 (MFGKGGLGGLMKQAQQMQERMQK) is disordered.

The protein belongs to the YbaB/EbfC family. In terms of assembly, homodimer.

Its subcellular location is the cytoplasm. The protein resides in the nucleoid. In terms of biological role, binds to DNA and alters its conformation. May be involved in regulation of gene expression, nucleoid organization and DNA protection. In Actinobacillus succinogenes (strain ATCC 55618 / DSM 22257 / CCUG 43843 / 130Z), this protein is Nucleoid-associated protein Asuc_0997.